Here is a 227-residue protein sequence, read N- to C-terminus: PKHD-type hydroxylase ACICU_00484 (227 aa).

The Fe2OG dioxygenase domain maps to 78-178 (DIIPPLFNRY…RIASFFWVQS (101 aa)). 3 residues coordinate Fe cation: His96, Asp98, and His159. Arg169 contacts 2-oxoglutarate.

Fe(2+) serves as cofactor. Requires L-ascorbate as cofactor.

The chain is PKHD-type hydroxylase ACICU_00484 from Acinetobacter baumannii (strain ACICU).